Reading from the N-terminus, the 175-residue chain is Ribosome maturation factor RimM (175 aa).

One can recognise a PRC barrel domain in the interval 100–173 (EGEYYFHEII…TIIIRPMEGL (74 aa)).

It belongs to the RimM family. Binds ribosomal protein uS19.

The protein resides in the cytoplasm. An accessory protein needed during the final step in the assembly of 30S ribosomal subunit, possibly for assembly of the head region. Essential for efficient processing of 16S rRNA. May be needed both before and after RbfA during the maturation of 16S rRNA. It has affinity for free ribosomal 30S subunits but not for 70S ribosomes. The sequence is that of Ribosome maturation factor RimM from Geobacillus kaustophilus (strain HTA426).